We begin with the raw amino-acid sequence, 285 residues long: Large ribosomal subunit protein uL1m (285 aa).

The N-terminal 19 residues, 1-19, are a transit peptide targeting the mitochondrion; it reads MLSVVAIPKICVTGPARRC.

It belongs to the universal ribosomal protein uL1 family. As to quaternary structure, component of the mitochondrial large ribosomal subunit (mt-LSU). Mature yeast 74S mitochondrial ribosomes consist of a small (37S) and a large (54S) subunit. The 37S small subunit contains a 15S ribosomal RNA (15S mt-rRNA) and 34 different proteins. The 54S large subunit contains a 21S rRNA (21S mt-rRNA) and 46 different proteins.

The protein resides in the mitochondrion. Its function is as follows. Component of the mitochondrial ribosome (mitoribosome), a dedicated translation machinery responsible for the synthesis of mitochondrial genome-encoded proteins, including at least some of the essential transmembrane subunits of the mitochondrial respiratory chain. The mitoribosomes are attached to the mitochondrial inner membrane and translation products are cotranslationally integrated into the membrane. This chain is Large ribosomal subunit protein uL1m (MRPL1), found in Saccharomyces cerevisiae (strain ATCC 204508 / S288c) (Baker's yeast).